Reading from the N-terminus, the 144-residue chain is uncharacterized protein (144 aa).

A helical membrane pass occupies residues 25–47 (LTLLDGCCVALVLALTAWSGFFV).

The protein localises to the membrane. This is an uncharacterized protein from Treponema pallidum (strain Nichols).